The following is a 375-amino-acid chain: Growth/differentiation factor 8 (375 aa).

Positions 1–23 (MQKLQIYVYIYLFMLIVAGPVDL) are cleaved as a signal peptide. The propeptide occupies 24 to 266 (NENSEQKENV…VTDTPKRSRR (243 aa)). The N-linked (GlcNAc...) asparagine glycan is linked to Asn71. 4 cysteine pairs are disulfide-bonded: Cys272-Cys282, Cys281-Cys340, Cys309-Cys372, and Cys313-Cys374.

It belongs to the TGF-beta family. In terms of assembly, homodimer; disulfide-linked. Interacts with WFIKKN2, leading to inhibit its activity. Interacts with FSTL3. In terms of processing, synthesized as large precursor molecule that undergoes proteolytic cleavage to generate an N-terminal propeptide and a disulfide linked C-terminal dimer, which is the biologically active molecule. The circulating form consists of a latent complex of the C-terminal dimer and other proteins, including its propeptide, which maintain the C-terminal dimer in a latent, inactive state. Ligand activation requires additional cleavage of the prodomain by a tolloid-like metalloproteinase.

The protein resides in the secreted. Acts specifically as a negative regulator of skeletal muscle growth. This Sus scrofa (Pig) protein is Growth/differentiation factor 8 (MSTN).